We begin with the raw amino-acid sequence, 531 residues long: Na(+)/H(+) antiporter NhaB (531 aa).

The next 11 membrane-spanning stretches (helical) occupy residues 23 to 45, 66 to 86, 97 to 117, 130 to 164, 206 to 226, 244 to 264, 307 to 327, 352 to 372, 393 to 413, 451 to 471, and 478 to 498; these read IAILSFLVINPIVFYLNPFVAGW, PGGLLAIEAVIIGMTSPSQVL, LLLIFMVAGIYFMKQLLLFVF, VSLMFCIASAFLSAFLDALTVIAVIIAVAVGFYSI, LLMHAGIGTALGGVCTMVGEP, LRMGPVTVPVFISGIATCFLV, AFVGVWLIVGLAFHLASVGLI, EEALPFTALLAVFFAIVGVII, LVIFYIANGLLSMVSDNVFVG, ATPNGQAAFLFLLTSAIAPLI, and MVWMALPYTIVLSIVGILAIE.

It belongs to the NhaB Na(+)/H(+) (TC 2.A.34) antiporter family.

Its subcellular location is the cell inner membrane. The enzyme catalyses 2 Na(+)(in) + 3 H(+)(out) = 2 Na(+)(out) + 3 H(+)(in). In terms of biological role, na(+)/H(+) antiporter that extrudes sodium in exchange for external protons. This Shewanella loihica (strain ATCC BAA-1088 / PV-4) protein is Na(+)/H(+) antiporter NhaB.